The sequence spans 519 residues: T-complex protein 11-like protein 2 (519 aa).

A disordered region spans residues 1–57 (MPFNGEKQCVSEDQPSDSDSSRFSESMASLSDYECSRQSFTSDSSSKSSSPASTSPP). Ser-16 carries the phosphoserine modification. Composition is skewed to low complexity over residues 17 to 29 (DSDS…SMAS) and 36 to 55 (SRQS…ASTS).

This sequence belongs to the TCP11 family. Interacts with FMNL2; this interaction promotes muscle-derived satellite cell (MDSC) migration and differentiation.

It is found in the cytoplasm. The protein localises to the cytoskeleton. In terms of biological role, promotes the migration of muscle-derived satellite cells (MDSCs) during differentiation throught interaction with FMNL2 and therefore may participate in microfilament assembly. The polypeptide is T-complex protein 11-like protein 2 (Bos taurus (Bovine)).